An 882-amino-acid polypeptide reads, in one-letter code: Valine--tRNA ligase (882 aa).

The short motif at 45 to 55 (PNVTGKLHLGH) is the 'HIGH' region element. A 'KMSKS' region motif is present at residues 519 to 523 (KMSKS). Lysine 522 contacts ATP. The stretch at 808 to 882 (LADLLNVEEE…RIAEMHKLVK (75 aa)) forms a coiled coil.

It belongs to the class-I aminoacyl-tRNA synthetase family. ValS type 1 subfamily. In terms of assembly, monomer.

The protein resides in the cytoplasm. The enzyme catalyses tRNA(Val) + L-valine + ATP = L-valyl-tRNA(Val) + AMP + diphosphate. In terms of biological role, catalyzes the attachment of valine to tRNA(Val). As ValRS can inadvertently accommodate and process structurally similar amino acids such as threonine, to avoid such errors, it has a 'posttransfer' editing activity that hydrolyzes mischarged Thr-tRNA(Val) in a tRNA-dependent manner. The protein is Valine--tRNA ligase of Streptococcus pyogenes serotype M18 (strain MGAS8232).